Here is a 423-residue protein sequence, read N- to C-terminus: Polyglutamylase complex subunit TTLL1 (423 aa).

The region spanning 1 to 367 (MAGKVKWVTD…NGEIPDCKWN (367 aa)) is the TTL domain. ATP-binding positions include K138, 144-145 (QG), 181-184 (SLYI), and 194-196 (KFD). Q144 provides a ligand contact to a protein. An L-glutamate-binding site is contributed by R220. 241–242 (TN) lines the ATP pocket. K259 lines the L-glutamate pocket. Mg(2+) is bound by residues D313, E326, and N328. K344 is an L-glutamate binding site. The segment at 391 to 423 (GADRELRSRQGQSLGPRAGRSRDSGRAVLTTWK) is disordered.

This sequence belongs to the tubulin polyglutamylase family. Part of the neuronal tubulin polyglutamylase complex which contains TPGS1, TPGS2, TTLL1, LRRC49 and NICN1. Interacts with PCM1, CSTPP1 and LRRC49. Mg(2+) serves as cofactor. As to expression, expressed in a wide range of tissues. Has a stronger expression in heart, brain and testis.

It is found in the cytoplasm. It localises to the cytoskeleton. The protein localises to the cilium basal body. The protein resides in the cilium axoneme. Its subcellular location is the cell projection. It is found in the cilium. It localises to the flagellum. It catalyses the reaction (L-glutamyl)(n)-gamma-L-glutamyl-L-glutamyl-[protein] + L-glutamate + ATP = (L-glutamyl)(n+1)-gamma-L-glutamyl-L-glutamyl-[protein] + ADP + phosphate + H(+). Catalytic subunit of a polyglutamylase complex which modifies tubulin, generating side chains of glutamate on the gamma-carboxyl group of specific glutamate residues within the C-terminal tail of tubulin. Probably involved in the side-chain elongation step of the polyglutamylation reaction rather than the initiation step. Modifies both alpha- and beta-tubulins with a preference for the alpha-tail. Unlike most polyglutamylases of the tubulin--tyrosine ligase family, only displays a catalytic activity when in complex with other proteins as it is most likely lacking domains important for autonomous activity. Part of the neuronal tubulin polyglutamylase complex. Mediates cilia and flagella polyglutamylation which is essential for their biogenesis and motility. Involved in respiratory motile cilia function through the regulation of beating asymmetry. Essential for sperm flagella biogenesis, motility and male fertility. Involved in KLF4 glutamylation which impedes its ubiquitination, thereby leading to somatic cell reprogramming, pluripotency maintenance and embryogenesis. In Homo sapiens (Human), this protein is Polyglutamylase complex subunit TTLL1.